A 548-amino-acid polypeptide reads, in one-letter code: Chaperonin GroEL (548 aa).

ATP contacts are provided by residues 30–33 (TLGP), Lys-51, 87–91 (DGTTT), Gly-415, and 479–481 (NAV).

The protein belongs to the chaperonin (HSP60) family. In terms of assembly, forms a cylinder of 14 subunits composed of two heptameric rings stacked back-to-back. Interacts with the co-chaperonin GroES.

It is found in the cytoplasm. It catalyses the reaction ATP + H2O + a folded polypeptide = ADP + phosphate + an unfolded polypeptide.. Together with its co-chaperonin GroES, plays an essential role in assisting protein folding. The GroEL-GroES system forms a nano-cage that allows encapsulation of the non-native substrate proteins and provides a physical environment optimized to promote and accelerate protein folding. This chain is Chaperonin GroEL, found in Stenotrophomonas maltophilia (Pseudomonas maltophilia).